The sequence spans 508 residues: Photosystem II CP47 reaction center protein (508 aa).

The next 6 membrane-spanning stretches (helical) occupy residues 21–36 (AVHL…WAGS), 101–115 (IVLS…IWHW), 140–156 (GIHL…FGAF), 203–218 (IAAG…FHLS), 237–252 (VLSS…AFVV), and 457–472 (TFAL…HGAR).

Belongs to the PsbB/PsbC family. PsbB subfamily. In terms of assembly, PSII is composed of 1 copy each of membrane proteins PsbA, PsbB, PsbC, PsbD, PsbE, PsbF, PsbH, PsbI, PsbJ, PsbK, PsbL, PsbM, PsbT, PsbX, PsbY, PsbZ, Psb30/Ycf12, at least 3 peripheral proteins of the oxygen-evolving complex and a large number of cofactors. It forms dimeric complexes. The cofactor is Binds multiple chlorophylls. PSII binds additional chlorophylls, carotenoids and specific lipids..

It localises to the plastid. The protein localises to the chloroplast thylakoid membrane. One of the components of the core complex of photosystem II (PSII). It binds chlorophyll and helps catalyze the primary light-induced photochemical processes of PSII. PSII is a light-driven water:plastoquinone oxidoreductase, using light energy to abstract electrons from H(2)O, generating O(2) and a proton gradient subsequently used for ATP formation. This is Photosystem II CP47 reaction center protein from Anthoceros angustus (Hornwort).